The chain runs to 212 residues: Methylthioribulose-1-phosphate dehydratase (212 aa).

Residues histidine 97 and histidine 99 each contribute to the Zn(2+) site.

Belongs to the aldolase class II family. MtnB subfamily. As to quaternary structure, homotetramer. It depends on Zn(2+) as a cofactor.

The catalysed reaction is 5-(methylsulfanyl)-D-ribulose 1-phosphate = 5-methylsulfanyl-2,3-dioxopentyl phosphate + H2O. It participates in amino-acid biosynthesis; L-methionine biosynthesis via salvage pathway; L-methionine from S-methyl-5-thio-alpha-D-ribose 1-phosphate: step 2/6. Its function is as follows. Catalyzes the dehydration of methylthioribulose-1-phosphate (MTRu-1-P) into 2,3-diketo-5-methylthiopentyl-1-phosphate (DK-MTP-1-P). This is Methylthioribulose-1-phosphate dehydratase from Bacillus cereus (strain AH187).